Reading from the N-terminus, the 862-residue chain is Ecdysone-induced protein 78C (862 aa).

Disordered regions lie at residues 28 to 83 (SSEQ…EEAL), 97 to 138 (LHFF…KQHH), 173 to 210 (ASLS…LNCT), and 230 to 353 (ASNH…NNNN). Over residues 37–46 (KQEDLIKDFT) the composition is skewed to basic and acidic residues. Acidic residues predominate over residues 47–82 (RDEEEQPSEEEAEEEDNEEDEEEEGEEEEEDEDEEA). Positions 105 to 119 (DSSTQGAYSEANSLE) are enriched in polar residues. Composition is skewed to low complexity over residues 173 to 206 (ASLS…QQHQ), 230 to 291 (ASNH…NNSV), 308 to 335 (QQQQ…QQQQ), and 342 to 353 (SSSSNGSSNNNN). A DNA-binding region (nuclear receptor) is located at residues 360 to 435 (FVPCKVCGDK…AGMSRDSVRY (76 aa)). 2 consecutive NR C4-type zinc fingers follow at residues 363–383 (CKVC…CEGC) and 399–418 (CLRD…CQYC). A disordered region spans residues 444–557 (ELNGAAASSA…NNNSSSGNAS (114 aa)). Over residues 447-460 (GAAASSAAAGAPAS) the composition is skewed to low complexity. Residues 463–472 (VDDSTSSTLH) show a composition bias toward polar residues. The span at 475–508 (HLQQQQQQHLLQQQQQQQHQPQLQQHHQLQQQPH) shows a compositional bias: low complexity. Over residues 516–533 (TPSTPQTPQMCSIASSPS) the composition is skewed to polar residues. The span at 539–555 (NSANNNNNNNNNSSSGN) shows a compositional bias: low complexity. The region spanning 626 to 855 (YTEELTRELM…PPLFAEIFDI (230 aa)) is the NR LBD domain.

This sequence belongs to the nuclear hormone receptor family. NR1 subfamily.

It is found in the nucleus. In terms of biological role, induces the early late puff 78C which triggers puparium formation and development. The polypeptide is Ecdysone-induced protein 78C (Eip78C) (Drosophila melanogaster (Fruit fly)).